A 68-amino-acid chain; its full sequence is Neuronal regeneration-related protein (68 aa).

The segment at 22-54 (EGRLPKGRLPVPKEVNRKKNDETNAASLTPLGS) is disordered. A compositionally biased stretch (polar residues) spans 44-54 (TNAASLTPLGS). A Phosphoserine modification is found at S59.

Interacts with the latency-associated peptides (LAP) of TGFB1 and TGFB2; the interaction results in a decrease in TGFB autoinduction. Interacts with FLNA. Phosphorylated on Ser-59. Phosphorylation decreases stability and activity. In terms of tissue distribution, expressed in lung (at protein level).

It localises to the cytoplasm. Functionally, may have roles in neural function. Ectopic expression augments motility of gliomas. Also promotes axonal regeneration. May also have functions in cellular differentiation. Induces differentiation of fibroblast into myofibroblast and myofibroblast ameboid migration. Increases retinoic-acid regulation of lipid-droplet biogenesis. Down-regulates the expression of TGFB1 and TGFB2 but not of TGFB3. May play a role in the regulation of alveolar generation. The protein is Neuronal regeneration-related protein (NREP) of Homo sapiens (Human).